A 281-amino-acid polypeptide reads, in one-letter code: Transcription factor LBX1 (281 aa).

Positions 1–20 (MTSKEDGKAAPGEERRRSPL) are enriched in basic and acidic residues. Positions 1–35 (MTSKEDGKAAPGEERRRSPLDHLPPPANSNKPLTP) are disordered. The segment at residues 125–184 (RRKSRTAFTNHQIYELEKRFLYQKYLSPADRDQIAQQLGLTNAQVITWFQNRRAKLKRDL) is a DNA-binding region (homeobox). Residues 214–281 (NSEATAGGGG…EEDEEIDVDD (68 aa)) are disordered. The segment covering 253-267 (SPASPLTDQPASSQD) has biased composition (polar residues). Acidic residues predominate over residues 268–281 (CSEDEEDEEIDVDD).

Interacts with SKOR1 which acts as a transcriptional corepressor.

It localises to the nucleus. In terms of biological role, transcription factor required for the development of GABAergic interneurons in the dorsal horn of the spinal cord and migration and further development of hypaxial muscle precursor cells for limb muscles, diaphragm and hypoglossal cord. This Homo sapiens (Human) protein is Transcription factor LBX1 (LBX1).